Consider the following 493-residue polypeptide: D-aminoacyl-tRNA deacylase (493 aa).

Basic and acidic residues predominate over residues 22–37 (DLGDWERRDDPSRPDA). 2 disordered regions span residues 22–44 (DLGD…GTYY) and 441–493 (PEGP…EPSE).

The protein belongs to the DtdA deacylase family. In terms of assembly, monomer. The cofactor is Zn(2+).

The catalysed reaction is a D-aminoacyl-tRNA + H2O = a tRNA + a D-alpha-amino acid + H(+). It catalyses the reaction glycyl-tRNA(Ala) + H2O = tRNA(Ala) + glycine + H(+). In terms of biological role, D-aminoacyl-tRNA deacylase with broad substrate specificity. By recycling D-aminoacyl-tRNA to D-amino acids and free tRNA molecules, this enzyme counteracts the toxicity associated with the formation of D-aminoacyl-tRNA entities in vivo. The sequence is that of D-aminoacyl-tRNA deacylase from Halorubrum lacusprofundi (strain ATCC 49239 / DSM 5036 / JCM 8891 / ACAM 34).